We begin with the raw amino-acid sequence, 258 residues long: Phosphate import ATP-binding protein PstB (258 aa).

In terms of domain architecture, ABC transporter spans 13–253 (ITVENLNLWY…PREKSTEDYI (241 aa)). ATP is bound at residue 45 to 52 (GPSGCGKS).

This sequence belongs to the ABC transporter superfamily. Phosphate importer (TC 3.A.1.7) family. As to quaternary structure, the complex is composed of two ATP-binding proteins (PstB), two transmembrane proteins (PstC and PstA) and a solute-binding protein (PstS).

The protein localises to the cell membrane. It carries out the reaction phosphate(out) + ATP + H2O = ADP + 2 phosphate(in) + H(+). Its function is as follows. Part of the ABC transporter complex PstSACB involved in phosphate import. Responsible for energy coupling to the transport system. The sequence is that of Phosphate import ATP-binding protein PstB from Methanosarcina mazei (strain ATCC BAA-159 / DSM 3647 / Goe1 / Go1 / JCM 11833 / OCM 88) (Methanosarcina frisia).